A 315-amino-acid polypeptide reads, in one-letter code: 4-hydroxy-3-methylbut-2-enyl diphosphate reductase (315 aa).

Residue cysteine 12 participates in [4Fe-4S] cluster binding. (2E)-4-hydroxy-3-methylbut-2-enyl diphosphate is bound by residues histidine 41 and histidine 74. Residues histidine 41 and histidine 74 each contribute to the dimethylallyl diphosphate site. 2 residues coordinate isopentenyl diphosphate: histidine 41 and histidine 74. Cysteine 96 contributes to the [4Fe-4S] cluster binding site. Histidine 124 is a (2E)-4-hydroxy-3-methylbut-2-enyl diphosphate binding site. Residue histidine 124 coordinates dimethylallyl diphosphate. Histidine 124 serves as a coordination point for isopentenyl diphosphate. Glutamate 126 acts as the Proton donor in catalysis. Threonine 168 serves as a coordination point for (2E)-4-hydroxy-3-methylbut-2-enyl diphosphate. Cysteine 198 serves as a coordination point for [4Fe-4S] cluster. (2E)-4-hydroxy-3-methylbut-2-enyl diphosphate contacts are provided by serine 226, serine 227, asparagine 228, and serine 270. The dimethylallyl diphosphate site is built by serine 226, serine 227, asparagine 228, and serine 270. Isopentenyl diphosphate is bound by residues serine 226, serine 227, asparagine 228, and serine 270.

Belongs to the IspH family. The cofactor is [4Fe-4S] cluster.

It carries out the reaction isopentenyl diphosphate + 2 oxidized [2Fe-2S]-[ferredoxin] + H2O = (2E)-4-hydroxy-3-methylbut-2-enyl diphosphate + 2 reduced [2Fe-2S]-[ferredoxin] + 2 H(+). The enzyme catalyses dimethylallyl diphosphate + 2 oxidized [2Fe-2S]-[ferredoxin] + H2O = (2E)-4-hydroxy-3-methylbut-2-enyl diphosphate + 2 reduced [2Fe-2S]-[ferredoxin] + 2 H(+). Its pathway is isoprenoid biosynthesis; dimethylallyl diphosphate biosynthesis; dimethylallyl diphosphate from (2E)-4-hydroxy-3-methylbutenyl diphosphate: step 1/1. The protein operates within isoprenoid biosynthesis; isopentenyl diphosphate biosynthesis via DXP pathway; isopentenyl diphosphate from 1-deoxy-D-xylulose 5-phosphate: step 6/6. Catalyzes the conversion of 1-hydroxy-2-methyl-2-(E)-butenyl 4-diphosphate (HMBPP) into a mixture of isopentenyl diphosphate (IPP) and dimethylallyl diphosphate (DMAPP). Acts in the terminal step of the DOXP/MEP pathway for isoprenoid precursor biosynthesis. The chain is 4-hydroxy-3-methylbut-2-enyl diphosphate reductase from Azotobacter vinelandii (strain DJ / ATCC BAA-1303).